Reading from the N-terminus, the 213-residue chain is MASISLPKHSLPSLLPTLKPITSSSQNLPILSKSSQSQFYGLKFSHSTSLSIPSSSSVKNTIFAKVNKGQAPPSFTLKDQDGKTLSLSKFKGKPVVVYFYPADETPGCTKQACAFRDSYEKFKKAGAEVVGISGDDPSSHKAFAKKYRLPFTLLSDEGNKIRKEWGVPADLFGTLPGRQTYVLDKKGVVQLIYNNQFQPEKHIDETLKLLQSL.

Residues 1–54 constitute a chloroplast transit peptide; the sequence is MASISLPKHSLPSLLPTLKPITSSSQNLPILSKSSQSQFYGLKFSHSTSLSIPS. The Thioredoxin domain occupies 66-213; it reads VNKGQAPPSF…DETLKLLQSL (148 aa). The active-site Cysteine sulfenic acid (-SOH) intermediate is Cys108. The cysteines at positions 108 and 113 are disulfide-linked.

Belongs to the peroxiredoxin family. BCP/PrxQ subfamily. Monomer.

It localises to the plastid. Its subcellular location is the chloroplast thylakoid lumen. The enzyme catalyses a hydroperoxide + [thioredoxin]-dithiol = an alcohol + [thioredoxin]-disulfide + H2O. In terms of biological role, thiol-specific peroxidase that catalyzes the reduction of hydrogen peroxide and organic hydroperoxides to water and alcohols, respectively. Plays a role in cell protection against oxidative stress by detoxifying peroxides. Involved in the plant defense against pathogen. The sequence is that of Peroxiredoxin Q, chloroplastic (PRXQ) from Populus jackii (Balm of Gilead).